The primary structure comprises 602 residues: DNA mismatch repair protein MutL (602 aa).

The protein belongs to the DNA mismatch repair MutL/HexB family.

This protein is involved in the repair of mismatches in DNA. It is required for dam-dependent methyl-directed DNA mismatch repair. May act as a 'molecular matchmaker', a protein that promotes the formation of a stable complex between two or more DNA-binding proteins in an ATP-dependent manner without itself being part of a final effector complex. The polypeptide is DNA mismatch repair protein MutL (Geotalea uraniireducens (strain Rf4) (Geobacter uraniireducens)).